Consider the following 159-residue polypeptide: Nucleotide-binding protein PSPTO_4393 (159 aa).

The protein belongs to the YajQ family.

Its function is as follows. Nucleotide-binding protein. The polypeptide is Nucleotide-binding protein PSPTO_4393 (Pseudomonas syringae pv. tomato (strain ATCC BAA-871 / DC3000)).